The primary structure comprises 261 residues: MYYAVSQARVNAAPATMLRPQRPGDVQLGASLYELVGYRQPPISSSSSTSSSSTASLLPKPAREKPEAPLAEPRGPAPESGGARADAKEEQQQQQLRRKINSRERKRMQDLNLAMDALREVILPYSAAHCQGAPGRKLSKIATLLLARNYILLLGSSLQELRRALGDGAGPAAPRLLLAGLPLLAAAPGSVLLAPGAVGPPETLRPTKYLSLALDEPPCGQFALPAGGAGSPGLCSCAVCKFPHLVPAGLGLAAVQAQFSK.

A disordered region spans residues 41–105; sequence PPISSSSSTS…LRRKINSRER (65 aa). Over residues 44-56 the composition is skewed to low complexity; the sequence is SSSSSTSSSSTAS. Residues 95–154 enclose the bHLH domain; that stretch reads QLRRKINSRERKRMQDLNLAMDALREVILPYSAAHCQGAPGRKLSKIATLLLARNYILLL.

In terms of tissue distribution, expressed specifically in the brain, including the corpus callosum, hippocampal and cerebral white matter. Also detected in cells scattered in gray matter, most probably in oligodendrocytes.

The protein resides in the nucleus. In terms of biological role, promotes formation and maturation of oligodendrocytes, especially within the brain. Cooperates with OLIG2 to establish the pMN domain of the embryonic neural tube. This is Oligodendrocyte transcription factor 1 (Olig1) from Rattus norvegicus (Rat).